The following is an 83-amino-acid chain: Kunitz-type serine protease inhibitor tigerin-3 (83 aa).

The first 24 residues, 1–24 (MSSGGLLLLLGLLTLWEILTPVSS), serve as a signal peptide directing secretion. The BPTI/Kunitz inhibitor domain occupies 31 to 81 (CHLPHDTGPCNRNTQAFYYNPVYHTCLKFIYGGCQGNSNNFKTIDECKRTC). Disulfide bonds link C31–C81, C40–C64, and C56–C77.

It belongs to the venom Kunitz-type family. As to expression, expressed by the venom gland.

The protein localises to the secreted. Functionally, serine protease inhibitor. This chain is Kunitz-type serine protease inhibitor tigerin-3, found in Notechis scutatus scutatus (Mainland tiger snake).